The primary structure comprises 428 residues: Glutamate-1-semialdehyde 2,1-aminomutase (428 aa).

Lys-267 bears the N6-(pyridoxal phosphate)lysine mark.

It belongs to the class-III pyridoxal-phosphate-dependent aminotransferase family. HemL subfamily. In terms of assembly, homodimer. Pyridoxal 5'-phosphate serves as cofactor.

The protein localises to the cytoplasm. The enzyme catalyses (S)-4-amino-5-oxopentanoate = 5-aminolevulinate. Its pathway is porphyrin-containing compound metabolism; protoporphyrin-IX biosynthesis; 5-aminolevulinate from L-glutamyl-tRNA(Glu): step 2/2. It participates in porphyrin-containing compound metabolism; chlorophyll biosynthesis. This is Glutamate-1-semialdehyde 2,1-aminomutase from Prochlorococcus marinus (strain MIT 9303).